A 70-amino-acid chain; its full sequence is MKFLVNVALVFMVVYISFIYAAPEPEPAPEAEAEADAEADPEAGIGAVLKVLTTGLPALISWIKRKRQQG.

Residues 1–21 (MKFLVNVALVFMVVYISFIYA) form the signal peptide. A propeptide spans 22 to 43 (APEPEPAPEAEAEADAEADPEA) (removed by a dipeptidylpeptidase). Gly-44 is modified (N-formylglycine; partial). Residue Gln-69 is modified to Glutamine amide.

Belongs to the melittin family. In terms of assembly, monomer (in solution and for integration into membranes), homotetramer (in solution and potentially as a toroidal pore in membranes), and potenially homomultimer (as a toroidal pore in membranes). In terms of tissue distribution, expressed by the venom gland.

It is found in the secreted. It localises to the target cell membrane. In terms of biological role, main toxin of bee venom with strong hemolytic activity and antimicrobial activity. It has enhancing effects on bee venom phospholipase A2 activity. This amphipathic toxin binds to negatively charged membrane surface and forms pore by inserting into lipid bilayers inducing the leakage of ions and molecules and the enhancement of permeability that ultimately leads to cell lysis. It acts as a voltage-gated pore with higher selectivity for anions over cations. The ion conductance has been shown to be voltage-dependent. Self-association of melittin in membranes is promoted by high ionic strength, but not by the presence of negatively charged lipids. In vivo, intradermal injection into healthy human volunteers produce sharp pain sensation and an inflammatory response. It produces pain by activating primary nociceptor cells directly and indirectly due to its ability to activate plasma membrane phospholipase A2 and its pore-forming activity. This chain is Melittin (MELT), found in Apis cerana cerana (Oriental honeybee).